A 545-amino-acid chain; its full sequence is CTP synthase (545 aa).

The segment at 1-266 (MTTNYIFVTG…DDYICKRFSL (266 aa)) is amidoligase domain. Ser14 is a binding site for CTP. Ser14 contributes to the UTP binding site. Residues 15–20 (SLGKGI) and Asp72 each bind ATP. Mg(2+) is bound by residues Asp72 and Glu140. Residues 147-149 (DIE), 187-192 (KTKPTQ), and Lys223 contribute to the CTP site. Residues 187–192 (KTKPTQ) and Lys223 each bind UTP. 239-241 (KDV) provides a ligand contact to ATP. In terms of domain architecture, Glutamine amidotransferase type-1 spans 291-542 (NIGMVGKYVE…VKAASEYQKR (252 aa)). An L-glutamine-binding site is contributed by Gly352. The Nucleophile; for glutamine hydrolysis role is filled by Cys379. Residues 380 to 383 (LGMQ), Glu403, and Arg470 each bind L-glutamine. Active-site residues include His515 and Glu517.

The protein belongs to the CTP synthase family. Homotetramer.

It carries out the reaction UTP + L-glutamine + ATP + H2O = CTP + L-glutamate + ADP + phosphate + 2 H(+). It catalyses the reaction L-glutamine + H2O = L-glutamate + NH4(+). The enzyme catalyses UTP + NH4(+) + ATP = CTP + ADP + phosphate + 2 H(+). Its pathway is pyrimidine metabolism; CTP biosynthesis via de novo pathway; CTP from UDP: step 2/2. Allosterically activated by GTP, when glutamine is the substrate; GTP has no effect on the reaction when ammonia is the substrate. The allosteric effector GTP functions by stabilizing the protein conformation that binds the tetrahedral intermediate(s) formed during glutamine hydrolysis. Inhibited by the product CTP, via allosteric rather than competitive inhibition. In terms of biological role, catalyzes the ATP-dependent amination of UTP to CTP with either L-glutamine or ammonia as the source of nitrogen. Regulates intracellular CTP levels through interactions with the four ribonucleotide triphosphates. The protein is CTP synthase of Erwinia tasmaniensis (strain DSM 17950 / CFBP 7177 / CIP 109463 / NCPPB 4357 / Et1/99).